An 828-amino-acid chain; its full sequence is Periplasmic nitrate reductase (828 aa).

Positions 1–31 form a signal peptide, tat-type signal; it reads MKLSRRSFMKANAVAAAAAAAGLSVPGVARA. The 4Fe-4S Mo/W bis-MGD-type domain occupies 39–95; sequence IKWDKAPCRFCGTGCGVLVGTQQGRVVACQGDPDAPVNRGLNCIKGYFLPKIMYGKD. [4Fe-4S] cluster contacts are provided by cysteine 46, cysteine 49, cysteine 53, and cysteine 81. Mo-bis(molybdopterin guanine dinucleotide) is bound by residues lysine 83, glutamine 150, asparagine 175, cysteine 179, 212–219, 243–247, 262–264, methionine 372, glutamine 376, asparagine 482, 508–509, lysine 531, aspartate 558, and 718–727; these read WGANMAEM, STYQH, QSD, SD, and TGRVLEHWHT. Substrate is bound at residue phenylalanine 794. Mo-bis(molybdopterin guanine dinucleotide) contacts are provided by asparagine 802 and lysine 819.

The protein belongs to the prokaryotic molybdopterin-containing oxidoreductase family. NasA/NapA/NarB subfamily. In terms of assembly, component of the periplasmic nitrate reductase NapAB complex composed of NapA and NapB. [4Fe-4S] cluster is required as a cofactor. Mo-bis(molybdopterin guanine dinucleotide) serves as cofactor. In terms of processing, predicted to be exported by the Tat system. The position of the signal peptide cleavage has not been experimentally proven.

It localises to the periplasm. It carries out the reaction 2 Fe(II)-[cytochrome] + nitrate + 2 H(+) = 2 Fe(III)-[cytochrome] + nitrite + H2O. Functionally, catalytic subunit of the periplasmic nitrate reductase complex NapAB. Receives electrons from NapB and catalyzes the reduction of nitrate to nitrite. The polypeptide is Periplasmic nitrate reductase (Escherichia coli O8 (strain IAI1)).